A 282-amino-acid polypeptide reads, in one-letter code: 2-dehydro-3-deoxyphosphooctonate aldolase (282 aa).

Belongs to the KdsA family.

The protein localises to the cytoplasm. It carries out the reaction D-arabinose 5-phosphate + phosphoenolpyruvate + H2O = 3-deoxy-alpha-D-manno-2-octulosonate-8-phosphate + phosphate. Its pathway is carbohydrate biosynthesis; 3-deoxy-D-manno-octulosonate biosynthesis; 3-deoxy-D-manno-octulosonate from D-ribulose 5-phosphate: step 2/3. The protein operates within bacterial outer membrane biogenesis; lipopolysaccharide biosynthesis. This is 2-dehydro-3-deoxyphosphooctonate aldolase from Shewanella woodyi (strain ATCC 51908 / MS32).